A 127-amino-acid chain; its full sequence is uncharacterized protein (127 aa).

It localises to the mitochondrion. This is an uncharacterized protein from Arabidopsis thaliana (Mouse-ear cress).